Consider the following 179-residue polypeptide: Segregation and condensation protein B (179 aa).

Belongs to the ScpB family. As to quaternary structure, homodimer. Homodimerization may be required to stabilize the binding of ScpA to the Smc head domains. Component of a cohesin-like complex composed of ScpA, ScpB and the Smc homodimer, in which ScpA and ScpB bind to the head domain of Smc. The presence of the three proteins is required for the association of the complex with DNA.

It localises to the cytoplasm. In terms of biological role, participates in chromosomal partition during cell division. May act via the formation of a condensin-like complex containing Smc and ScpA that pull DNA away from mid-cell into both cell halves. This is Segregation and condensation protein B from Clostridioides difficile (strain 630) (Peptoclostridium difficile).